A 335-amino-acid chain; its full sequence is Glyceraldehyde-3-phosphate dehydrogenase 2 (335 aa).

Residues 13-14 and glycine 111 each bind NAD(+); that span reads TI. 140-142 contacts D-glyceraldehyde 3-phosphate; sequence SCN. The active-site Nucleophile is cysteine 141. NAD(+) is bound at residue arginine 169. Residues threonine 171 and 195–196 contribute to the D-glyceraldehyde 3-phosphate site; that span reads HG. Glutamine 300 contributes to the NAD(+) binding site.

It belongs to the glyceraldehyde-3-phosphate dehydrogenase family. In terms of assembly, homotetramer.

It is found in the cytoplasm. It catalyses the reaction D-glyceraldehyde 3-phosphate + phosphate + NADP(+) = (2R)-3-phospho-glyceroyl phosphate + NADPH + H(+). It carries out the reaction D-glyceraldehyde 3-phosphate + phosphate + NAD(+) = (2R)-3-phospho-glyceroyl phosphate + NADH + H(+). It participates in carbohydrate degradation; glycolysis; pyruvate from D-glyceraldehyde 3-phosphate: step 1/5. This is Glyceraldehyde-3-phosphate dehydrogenase 2 (gapB) from Methanosarcina acetivorans (strain ATCC 35395 / DSM 2834 / JCM 12185 / C2A).